The sequence spans 100 residues: Pregnancy-associated protein bPAP (100 aa).

Residues 1–40 are disordered; sequence DSELAGPRGARGPHGLSGPHGLSGLXGPXGYTGPIGMXGL. Residues 13-29 are compositionally biased toward low complexity; that stretch reads PHGLSGPHGLSGLXGPX.

In terms of tissue distribution, detected at high levels in the urine of pregnant females (at protein level) and at far lower levels in the urine of nonpregnant females.

In Bos taurus (Bovine), this protein is Pregnancy-associated protein bPAP.